A 446-amino-acid chain; its full sequence is Delta(8)-fatty-acid desaturase (446 aa).

One can recognise a Cytochrome b5 heme-binding domain in the interval 5–89 (KKYISVGELE…LEDYLVSEIS (85 aa)). Histidine 40 and histidine 63 together coordinate heme. 2 helical membrane-spanning segments follow: residues 112–132 (VIYC…GVLC) and 136–156 (LWVH…AAYL). The Histidine box-1 motif lies at 158 to 162 (HDSGH). Helical transmembrane passes span 174-195 (FAQV…KWTH), 253-273 (IYLV…LLLF), 282-302 (ALNI…VSCL), and 309-329 (VLFV…FTLN). The short motif at 195–199 (HNAHH) is the Histidine box-2 element. A Histidine box-3 motif is present at residues 372-376 (QLEHH).

This sequence belongs to the fatty acid desaturase type 1 family. It depends on Fe cation as a cofactor. As to expression, expressed only in young leaves.

It is found in the membrane. The catalysed reaction is an N-acyl-(4R)-4-hydroxysphinganine + 2 Fe(II)-[cytochrome b5] + O2 + 2 H(+) = a (4R,8E)-4-hydroxysphingenine ceramide + 2 Fe(III)-[cytochrome b5] + 2 H2O. It catalyses the reaction an N-acyl-(4R)-4-hydroxysphinganine + 2 Fe(II)-[cytochrome b5] + O2 + 2 H(+) = a (4R,8Z)-4-hydroxysphing-8-enine ceramide + 2 Fe(III)-[cytochrome b5] + 2 H2O. In terms of biological role, plays a major role as delta(8)-fatty-acid desaturase which introduces a double bond at the 8-position in the long-chain base (LCB) of ceramides with or without a hydroxy group at the 4-position. The enzyme produces both the 8E and 8Z isomers (in a 4:1 ratio). This structural modification contributes to the quantitative partitioning of ceramides between the two major sphingolipid classes, glucosylceramides and glycosylinositolphosphoryl ceramides. Sphingolipids are important membrane components involved in environmental stress responses, such as resistance to chilling, and act as cell signaling molecules. The polypeptide is Delta(8)-fatty-acid desaturase (sld1) (Borago officinalis (Bourrache)).